The chain runs to 767 residues: Photosystem I P700 chlorophyll a apoprotein A1 (767 aa).

8 consecutive transmembrane segments (helical) span residues I72 to A95, L158 to H181, L197 to L221, I305 to Y323, W364 to Y387, I403 to V429, A451 to H473, and F548 to L566. [4Fe-4S] cluster-binding residues include C590 and C599. Transmembrane regions (helical) follow at residues H606–W627 and T681–F703. H692 serves as a coordination point for chlorophyll a'. M700 and Y708 together coordinate chlorophyll a. W709 lines the phylloquinone pocket. Residues A741 to A761 form a helical membrane-spanning segment.

This sequence belongs to the PsaA/PsaB family. The PsaA/B heterodimer binds the P700 chlorophyll special pair and subsequent electron acceptors. PSI consists of a core antenna complex that captures photons, and an electron transfer chain that converts photonic excitation into a charge separation. The cyanobacterial PSI reaction center is composed of one copy each of PsaA,B,C,D,E,F,I,J,K,L,M and X, and forms trimeric complexes. Requires PSI electron transfer chain: 5 chlorophyll a, 1 chlorophyll a', 2 phylloquinones and 3 4Fe-4S clusters. PSI core antenna: 90 chlorophyll a, 22 carotenoids, 3 phospholipids and 1 galactolipid. P700 is a chlorophyll a/chlorophyll a' dimer, A0 is one or more chlorophyll a, A1 is one or both phylloquinones and FX is a shared 4Fe-4S iron-sulfur center. as cofactor.

It is found in the cellular thylakoid membrane. The catalysed reaction is reduced [plastocyanin] + hnu + oxidized [2Fe-2S]-[ferredoxin] = oxidized [plastocyanin] + reduced [2Fe-2S]-[ferredoxin]. In terms of biological role, psaA and PsaB bind P700, the primary electron donor of photosystem I (PSI), as well as the electron acceptors A0, A1 and FX. PSI is a plastocyanin/cytochrome c6-ferredoxin oxidoreductase, converting photonic excitation into a charge separation, which transfers an electron from the donor P700 chlorophyll pair to the spectroscopically characterized acceptors A0, A1, FX, FA and FB in turn. Oxidized P700 is reduced on the lumenal side of the thylakoid membrane by plastocyanin or cytochrome c6. This is Photosystem I P700 chlorophyll a apoprotein A1 from Synechococcus sp. (strain CC9902).